A 27-amino-acid polypeptide reads, in one-letter code: Snake venom serine protease Afaacytin alpha/beta/beta' chains (27 aa).

In terms of domain architecture, Peptidase S1 spans 1–27 (VIGGAECNINEHRSLVLLYXSSSXFGE).

Belongs to the peptidase S1 family. Snake venom subfamily. As to quaternary structure, heterodimer of an alpha and a beta chain. Subunit beta is constituted of two disulfide-linked polypeptidic chains, beta and beta'. Calcium appears to be required for structural cohesion of the molecule. Post-translationally, both chains alpha and beta are N-glycosylated. In terms of tissue distribution, expressed by the venom gland.

The protein resides in the secreted. With respect to regulation, inhibited by diisopropylfluorophosphate (DFP), benzamidine, heparin and hirudin, but not by plasmatic thrombin inhibitors, antithrombin-III and ecotin. Snake venom serine protease that exhibits alpha-fibrinase and beta-fibrinogenase activities. It replaces missing factors VIII (F8) and IX (F9) in deficient plasmas by activating purified human factor X (F10) into factor Xa. It releases serotonin from platelets and induces platelet aggregation in human (but not in rabbit). Has caseinolytic, arginine-esterase and amidase activities. The polypeptide is Snake venom serine protease Afaacytin alpha/beta/beta' chains (Cerastes cerastes (Horned desert viper)).